The sequence spans 141 residues: Nucleoside diphosphate kinase (141 aa).

Positions 9, 57, 85, 91, 102, and 112 each coordinate ATP. The active-site Pros-phosphohistidine intermediate is the His-115.

This sequence belongs to the NDK family. Homotetramer. Mg(2+) is required as a cofactor.

It is found in the cytoplasm. It catalyses the reaction a 2'-deoxyribonucleoside 5'-diphosphate + ATP = a 2'-deoxyribonucleoside 5'-triphosphate + ADP. The enzyme catalyses a ribonucleoside 5'-diphosphate + ATP = a ribonucleoside 5'-triphosphate + ADP. Functionally, major role in the synthesis of nucleoside triphosphates other than ATP. The ATP gamma phosphate is transferred to the NDP beta phosphate via a ping-pong mechanism, using a phosphorylated active-site intermediate. The chain is Nucleoside diphosphate kinase from Chlamydia trachomatis serovar D (strain ATCC VR-885 / DSM 19411 / UW-3/Cx).